Here is a 139-residue protein sequence, read N- to C-terminus: Putative pre-16S rRNA nuclease (139 aa).

Belongs to the YqgF nuclease family.

The protein resides in the cytoplasm. Could be a nuclease involved in processing of the 5'-end of pre-16S rRNA. The sequence is that of Putative pre-16S rRNA nuclease from Pectobacterium atrosepticum (strain SCRI 1043 / ATCC BAA-672) (Erwinia carotovora subsp. atroseptica).